Reading from the N-terminus, the 398-residue chain is tRNA-specific 2-thiouridylase MnmA (398 aa).

Residues Ala19–Ser26 and Leu45 each bind ATP. The Nucleophile role is filled by Cys113. The cysteines at positions 113 and 210 are disulfide-linked. Gly137 serves as a coordination point for ATP. Residues Arg160 to Gln162 form an interaction with tRNA region. The Cysteine persulfide intermediate role is filled by Cys210.

Belongs to the MnmA/TRMU family.

It is found in the cytoplasm. It carries out the reaction S-sulfanyl-L-cysteinyl-[protein] + uridine(34) in tRNA + AH2 + ATP = 2-thiouridine(34) in tRNA + L-cysteinyl-[protein] + A + AMP + diphosphate + H(+). Its function is as follows. Catalyzes the 2-thiolation of uridine at the wobble position (U34) of tRNA, leading to the formation of s(2)U34. This chain is tRNA-specific 2-thiouridylase MnmA, found in Rhodopseudomonas palustris (strain BisB5).